The primary structure comprises 165 residues: E3 ubiquitin ligase complex SCF subunit sconC (165 aa).

Positions 106–165 are interaction with the F-box domain of F-box proteins; it reads ILAANYLDIKALLDVGCKTVANMIKGKSPEEIRKTFNIQNDFTPEEEDQIRRENEWAEDR.

It belongs to the SKP1 family. In terms of assembly, component of the SCF (SKP1-CUL1-F-box protein) E3 ubiquitin ligase complexes.

The protein operates within protein modification; protein ubiquitination. Its function is as follows. Essential component of the SCF (SKP1-CUL1-F-box protein) E3 ubiquitin ligase complexes, which mediate the ubiquitination and subsequent proteasomal degradation of target proteins. Controls sulfur metabolite repression, probably by mediating the inactivation or degradation of the metR transcription factor. This is E3 ubiquitin ligase complex SCF subunit sconC (sconC) from Arthroderma otae (Microsporum canis).